The following is a 100-amino-acid chain: Urease subunit gamma (100 aa).

It belongs to the urease gamma subunit family. As to quaternary structure, heterotrimer of UreA (gamma), UreB (beta) and UreC (alpha) subunits. Three heterotrimers associate to form the active enzyme.

Its subcellular location is the cytoplasm. The catalysed reaction is urea + 2 H2O + H(+) = hydrogencarbonate + 2 NH4(+). It functions in the pathway nitrogen metabolism; urea degradation; CO(2) and NH(3) from urea (urease route): step 1/1. This is Urease subunit gamma from Thioalkalivibrio sulfidiphilus (strain HL-EbGR7).